Reading from the N-terminus, the 304-residue chain is UDP-N-acetylenolpyruvoylglucosamine reductase (304 aa).

An FAD-binding PCMH-type domain is found at Ile-33–Arg-213. Arg-177 is a catalytic residue. The Proton donor role is filled by Ser-227. Glu-297 is a catalytic residue.

It belongs to the MurB family. FAD is required as a cofactor.

The protein localises to the cytoplasm. It catalyses the reaction UDP-N-acetyl-alpha-D-muramate + NADP(+) = UDP-N-acetyl-3-O-(1-carboxyvinyl)-alpha-D-glucosamine + NADPH + H(+). Its pathway is cell wall biogenesis; peptidoglycan biosynthesis. Functionally, cell wall formation. The polypeptide is UDP-N-acetylenolpyruvoylglucosamine reductase (Alkaliphilus oremlandii (strain OhILAs) (Clostridium oremlandii (strain OhILAs))).